An 89-amino-acid polypeptide reads, in one-letter code: MAQKKAGGSSRNGRDSVGQRRGVKRFGGQRVLAGNILVRQLGTTVHPGVNVGMGRDFTLFAKIDGVVRFEKYIRKRRVLTRVHVEAAAS.

A disordered region spans residues Met1–Phe26.

This sequence belongs to the bacterial ribosomal protein bL27 family.

The polypeptide is Large ribosomal subunit protein bL27 (Desulfovibrio desulfuricans (strain ATCC 27774 / DSM 6949 / MB)).